Consider the following 158-residue polypeptide: 2-C-methyl-D-erythritol 2,4-cyclodiphosphate synthase (158 aa).

2 residues coordinate a divalent metal cation: Asp9 and His11. 4-CDP-2-C-methyl-D-erythritol 2-phosphate-binding positions include 9-11 (DVH) and 35-36 (HS). His43 provides a ligand contact to a divalent metal cation. 4-CDP-2-C-methyl-D-erythritol 2-phosphate is bound by residues 57–59 (DIG), 62–66 (FPDTD), 133–136 (TTTE), Phe140, and Arg143.

The protein belongs to the IspF family. As to quaternary structure, homotrimer. A divalent metal cation serves as cofactor.

It catalyses the reaction 4-CDP-2-C-methyl-D-erythritol 2-phosphate = 2-C-methyl-D-erythritol 2,4-cyclic diphosphate + CMP. It functions in the pathway isoprenoid biosynthesis; isopentenyl diphosphate biosynthesis via DXP pathway; isopentenyl diphosphate from 1-deoxy-D-xylulose 5-phosphate: step 4/6. Involved in the biosynthesis of isopentenyl diphosphate (IPP) and dimethylallyl diphosphate (DMAPP), two major building blocks of isoprenoid compounds. Catalyzes the conversion of 4-diphosphocytidyl-2-C-methyl-D-erythritol 2-phosphate (CDP-ME2P) to 2-C-methyl-D-erythritol 2,4-cyclodiphosphate (ME-CPP) with a corresponding release of cytidine 5-monophosphate (CMP). The polypeptide is 2-C-methyl-D-erythritol 2,4-cyclodiphosphate synthase (Haemophilus influenzae (strain PittEE)).